Consider the following 744-residue polypeptide: Glucosamine inositolphosphorylceramide transferase 1 (744 aa).

3 helical membrane passes run 31-51 (FLVAAAAGAALVGGVYFWLVV), 378-398 (SLFGYMGFLVAVALVTFVGFV), and 460-480 (LFFCVIALIGIVNVCIAVHFL). Residues Asn-534, 558-563 (NSLNNR), 579-581 (DDD), Arg-609, and 665-669 (FNCED) contribute to the substrate site. Residue Asp-581 participates in Mn(2+) binding. Cys-667 and Cys-718 are disulfide-bonded. Residue Asp-669 is part of the active site.

Belongs to the glycosyltransferase 64 family. Mn(2+) is required as a cofactor.

The protein localises to the membrane. It participates in sphingolipid metabolism. Its function is as follows. Essential protein. Glycosyltransferase that mediates the glycosylation of glycosylinositol phosphorylceramides (GIPCs), the major sphingolipids in the plasma membrane; acts as a HexN(Ac)-specific GIPC sugar transferase. Responsible for the glycosylation of a subgroup of GIPCs found in seeds and pollen that contain GlcNAc and GlcN (GlcN(Ac)). Maybe involved in the maintenance of cell-cell adhesion. This is Glucosamine inositolphosphorylceramide transferase 1 from Oryza sativa subsp. indica (Rice).